The sequence spans 716 residues: Pyruvate/proton symporter BtsT (716 aa).

The Cytoplasmic segment spans residues 1–5 (MDTKK). The helical transmembrane segment at 6–26 (IFKHIPWVILGIIGAFCLAVV) threads the bilayer. The Periplasmic portion of the chain corresponds to 27-30 (ALRR). Residues 31 to 51 (GEHISALWIVVASVSVYLVAY) form a helical membrane-spanning segment. The Cytoplasmic segment spans residues 52–88 (RYYSLYIAQKVMKLDPTRATPAVINNDGLNYVPTNRY). A helical transmembrane segment spans residues 89–109 (VLFGHHFAAIAGAGPLVGPVL). Residues 110–119 (AAQMGYLPGT) are Periplasmic-facing. A helical membrane pass occupies residues 120–140 (LWLLAGVVLAGAVQDFMVLFI). Residues 141 to 163 (SSRRNGASLGEMIKEEMGPVPGT) lie on the Cytoplasmic side of the membrane. A helical membrane pass occupies residues 164–184 (IALFGCFLIMIIILAVLALIV). Over 185 to 191 (VKALAES) the chain is Periplasmic. Residues 192-212 (PWGVFTVCSTVPIALFMGIYM) traverse the membrane as a helical segment. Over 213–222 (RFIRPGRVGE) the chain is Cytoplasmic. A helical membrane pass occupies residues 223–243 (VSVIGIVLLVASIYFGGVIAH). At 244–257 (DPYWGPALTFKDTT) the chain is on the periplasmic side. Residues 258–278 (ITFALIGYAFVSALLPVWLIL) traverse the membrane as a helical segment. The Cytoplasmic portion of the chain corresponds to 279–282 (APRD). A helical transmembrane segment spans residues 283–303 (YLATFLKIGVIVGLALGIVVL). Residues 304–326 (NPELKMPAMTQYIDGTGPLWKGA) lie on the Periplasmic side of the membrane. Residues 327–347 (LFPFLFITIACGAVSGFHALI) traverse the membrane as a helical segment. The Cytoplasmic segment spans residues 348–374 (SSGTTPKLLANETDARFIGYGAMLMES). The helical transmembrane segment at 375–395 (FVAIMALVAASIIEPGLYFAM) threads the bilayer. At 396–484 (NTPPAGLGIT…HVFHKVLPMA (89 aa)) the chain is on the periplasmic side. Residues 485–505 (DMGFWYHFGILFEALFILTAL) form a helical membrane-spanning segment. Residues 506–531 (DAGTRSGRFMLQDLLGNFIPFLKKTD) lie on the Cytoplasmic side of the membrane. A helical transmembrane segment spans residues 532–552 (SLVAGIIGTAGCVGLWGYLLY). Residues 553–568 (QGVVDPLGGVKSLWPL) lie on the Periplasmic side of the membrane. A helical transmembrane segment spans residues 569–589 (FGISNQMLAAVALVLGTVVLI). Over 590–596 (KMKRTQY) the chain is Cytoplasmic. Residues 597–617 (IWVTVVPAVWLLICTTWALGL) form a helical membrane-spanning segment. Residues 618–668 (KLFSTNPQMEGFFYMASQYKEKIANGTDLTAQQIANMNHIVVNNYTNAGLS) are Periplasmic-facing. A helical transmembrane segment spans residues 669–689 (ILFLIVVYSIIFYGFKTWLAV). Over 690 to 716 (RNSDKRTDKETPYVPIPEGGVKISSHH) the chain is Cytoplasmic. Positions 696-716 (TDKETPYVPIPEGGVKISSHH) are disordered.

It belongs to the peptide transporter carbon starvation (CstA) (TC 2.A.114) family. As to quaternary structure, interacts with BtsS and YpdA.

The protein resides in the cell inner membrane. The catalysed reaction is pyruvate(out) + H(+)(out) = pyruvate(in) + H(+)(in). Its activity is regulated as follows. Transport is inhibited by the protonophores 2,4-dinitrophenol (DNP) and carbonyl cyanide m-chlorophenyl hydrazone (CCCP), but not by ionophores such as valinomycin, nonactin and nigericin. Functionally, transports pyruvate with a high affinity and specificity. The process is driven by the proton motive force. Under nutrient limiting conditions, mediates the uptake of pyruvate, thus enabling it to be used as a carbon source for the growth and survival. Part of a nutrient-sensing regulatory network composed of the two-component regulatory systems BtsS/BtsR and YpdA/YpdB, and their respective target proteins, BtsT and YhjX. The protein is Pyruvate/proton symporter BtsT of Escherichia coli (strain K12).